Consider the following 166-residue polypeptide: Large ribosomal subunit protein uL10 (166 aa).

The protein belongs to the universal ribosomal protein uL10 family. Part of the ribosomal stalk of the 50S ribosomal subunit. The N-terminus interacts with L11 and the large rRNA to form the base of the stalk. The C-terminus forms an elongated spine to which L12 dimers bind in a sequential fashion forming a multimeric L10(L12)X complex.

Forms part of the ribosomal stalk, playing a central role in the interaction of the ribosome with GTP-bound translation factors. This Pseudomonas fluorescens (strain Pf0-1) protein is Large ribosomal subunit protein uL10.